A 361-amino-acid chain; its full sequence is MSAVEIPHPSGCRVYDIRQQAQGSMNLQTAITDGLLSTPKTLPSLLLWDAEGLRLFDEFAHSASYYLRDKELTILRDRSHEIVTVVPAQSILVELGSLQKTGRLIRALEKQQKPVRYYAVDVSLSGLTNSLTELRKELGDLHFVDITGLLGTYDDCVNWISNPSGQDPMSSPTVTFLWMGNSISNLNHYIDSSSLLSQFRLACDASRLRCQFLIAADACQDAQVVRTAYDAQNPTLRAFLLNGLSHANSVLGRAAFSPQDWSCESGFYPEQGQLEVYYVPLRDVELDVGGDRVYRVQRGERVRAISSGKWGKKLMGRVACAAGFQMNHAWGDSAGQYYFYHLYGGTQTFTSGNERVSVAHR.

It belongs to the methyltransferase superfamily.

It functions in the pathway secondary metabolite biosynthesis. In terms of biological role, N-methyltransferase; part of the gene cluster that mediates the biosynthesis of benzomalvin A and D. The pathway begins with the loading of amino acid precursors onto the A domains of the non ribosomal peptide synthetases benY and benZ. BenY and the A1 domain of benZ are loaded with anthranilate (Anth), while the A2 domain of benZ is loaded with phenylalanine (Phe). N-methylation of Phe by the methyltransferase benX may happen before loading of Phe onto benZ, after loading of Phe, or after dipeptide formation. Condensation of Anth with the secondary amine of NmPhe or Phe is catalyzed by the C1 domain of benZ, forming a dipeptide intermediate. This is followed by in trans condensation of the Anth-NmPhe dipeptide with Anth bound to the T domain of benY by the C2 domain of benZ to form the linear tripeptide Anth-NmPhe-Anth. Cyclization and release of the tripeptide is then catalyzed by the C-terminal C domain of benY and the resulting 11-member macrocyclic intermediate is expected to spontaneously collapse to form the benzodiazepine core. Benzomalvin A is in conformational equilibrium with its atropisomer, benzomalvin D. In Aspergillus terreus, this protein is N-methyltransferase benX.